A 148-amino-acid polypeptide reads, in one-letter code: Nucleoside diphosphate kinase 1 (148 aa).

ATP-binding residues include Lys-9, Phe-57, Arg-85, Thr-91, Arg-102, and Asn-112. His-115 acts as the Pros-phosphohistidine intermediate in catalysis.

This sequence belongs to the NDK family. Mg(2+) is required as a cofactor.

It carries out the reaction a 2'-deoxyribonucleoside 5'-diphosphate + ATP = a 2'-deoxyribonucleoside 5'-triphosphate + ADP. The catalysed reaction is a ribonucleoside 5'-diphosphate + ATP = a ribonucleoside 5'-triphosphate + ADP. Its function is as follows. Major role in the synthesis of nucleoside triphosphates other than ATP. The ATP gamma phosphate is transferred to the NDP beta phosphate via a ping-pong mechanism, using a phosphorylated active-site intermediate. The polypeptide is Nucleoside diphosphate kinase 1 (NDKP1) (Mesembryanthemum crystallinum (Common ice plant)).